We begin with the raw amino-acid sequence, 65 residues long: Large ribosomal subunit protein bL35 (65 aa).

It belongs to the bacterial ribosomal protein bL35 family.

This Psychrobacter arcticus (strain DSM 17307 / VKM B-2377 / 273-4) protein is Large ribosomal subunit protein bL35.